Consider the following 310-residue polypeptide: Beta-carotene 3-hydroxylase 1, chloroplastic (310 aa).

The N-terminal 51 residues, 1–51, are a transit peptide targeting the chloroplast; sequence MAAGLSTAVTFKPLHRSFSSSSTDFRLRLPKSLSGFSPSLRFKRFSVCYVV. The next 2 helical transmembrane spans lie at 98-118 and 132-152; these read YLIA…MAVY and MLEM…MEFW. The Fatty acid hydroxylase domain occupies 145 to 272; sequence AAVGMEFWAR…KFNGVPYGLF (128 aa). The short motif at 157–162 is the Histidine box-1 element; it reads HRALWH. A Histidine box-2 motif is present at residues 169–173; that stretch reads HESHH. 2 helical membrane passes run 183-203 and 208-228; these read NDVF…YGFF and VPGL…AYMF. Positions 230–235 match the Histidine box-3 motif; the sequence is HDGLVH. The Histidine box-4 motif lies at 256-260; that stretch reads HQLHH.

It belongs to the sterol desaturase family. In terms of assembly, homodimer. In terms of tissue distribution, expressed in leaves, flowers, stems, roots and siliques.

The protein resides in the plastid. It is found in the chloroplast membrane. The enzyme catalyses all-trans-beta-carotene + 4 reduced [2Fe-2S]-[ferredoxin] + 2 O2 + 4 H(+) = all-trans-zeaxanthin + 4 oxidized [2Fe-2S]-[ferredoxin] + 2 H2O. Nonheme diiron monooxygenase involved in the biosynthesis of xanthophylls. Specific for beta-ring hydroxylations of beta-carotene. Also has a low activity toward the beta- and epsilon-rings of alpha-carotene. No activity with acyclic carotenoids such as lycopene and neurosporene. Uses ferredoxin as an electron donor. The polypeptide is Beta-carotene 3-hydroxylase 1, chloroplastic (BETA-OHASE 1) (Arabidopsis thaliana (Mouse-ear cress)).